A 512-amino-acid chain; its full sequence is ATP synthase subunit alpha (512 aa).

ATP is bound at residue glycine 169–threonine 176.

Belongs to the ATPase alpha/beta chains family. As to quaternary structure, F-type ATPases have 2 components, CF(1) - the catalytic core - and CF(0) - the membrane proton channel. CF(1) has five subunits: alpha(3), beta(3), gamma(1), delta(1), epsilon(1). CF(0) has three main subunits: a(1), b(2) and c(9-12). The alpha and beta chains form an alternating ring which encloses part of the gamma chain. CF(1) is attached to CF(0) by a central stalk formed by the gamma and epsilon chains, while a peripheral stalk is formed by the delta and b chains.

It is found in the cell inner membrane. It carries out the reaction ATP + H2O + 4 H(+)(in) = ADP + phosphate + 5 H(+)(out). Functionally, produces ATP from ADP in the presence of a proton gradient across the membrane. The alpha chain is a regulatory subunit. This is ATP synthase subunit alpha from Orientia tsutsugamushi (strain Boryong) (Rickettsia tsutsugamushi).